Reading from the N-terminus, the 117-residue chain is Protein SMALL AUXIN UP-REGULATED RNA 54 (117 aa).

Belongs to the ARG7 family. As to expression, expressed in trichomes. Hardly observed in leaves.

It localises to the cell membrane. Provide a mechanistic link between auxin and plasma membrane H(+)-ATPases (PM H(+)-ATPases, e.g. AHA1 and AHA2), and triggers PM H(+)-ATPases activity by promoting phosphorylation of their C-terminal autoinhibitory domain as a result of PP2C-D subfamily of type 2C phosphatases inhibition, thus leading to the acidification of the apoplast and the facilitation of solutes and water uptake to drive cell expansion. Triggers plant growth probably by promoting cell elongation. Regulates branch angles and bending. This Arabidopsis thaliana (Mouse-ear cress) protein is Protein SMALL AUXIN UP-REGULATED RNA 54.